The following is an 816-amino-acid chain: Phosphatidylinositol 4-kinase beta (816 aa).

Disordered stretches follow at residues 1 to 30 (MGDT…GSLL), 99 to 120 (EEED…RRRR), and 248 to 318 (AHRK…SFSS). N-acetylglycine is present on glycine 2. The tract at residues 2 to 68 (GDTVVEPAPL…VKLLHGGVAV (67 aa)) is interaction with ACBD3. Positions 52–242 (CQDVLEKVKL…GTKLRKLILS (191 aa)) constitute a PIK helical domain. Serine 258 bears the Phosphoserine mark. Phosphothreonine is present on threonine 263. Phosphoserine is present on residues serine 266, serine 275, serine 277, serine 284, and serine 294. 2 stretches are compositionally biased toward polar residues: residues 278-297 (DATA…SNPK) and 306-318 (SSST…SFSS). The residue at position 428 (serine 428) is a Phosphoserine. Position 438 is a phosphothreonine (threonine 438). The residue at position 511 (serine 511) is a Phosphoserine. Phosphothreonine occurs at positions 517 and 519. The region spanning 535 to 801 (EPWQEKVRRI…MVDGSMRSIT (267 aa)) is the PI3K/PI4K catalytic domain. Residues 541 to 547 (VRRIREG) form a G-loop region. The catalytic loop stretch occupies residues 668 to 676 (QVKDRHNGN). Residues 687 to 711 (HIDFGFILSSSPRNLGFETSAFKLT) form an activation loop region.

This sequence belongs to the PI3/PI4-kinase family. Type III PI4K subfamily. Interacts with ARF1 and ARF3 in the Golgi complex, but not with ARF4, ARF5 or ARF6. Interacts with NCS1/FREQ in a calcium-independent manner. Interacts with CALN1/CABP8 and CALN2/CABP7; in a calcium-dependent manner; this interaction competes with NCS1/FREQ binding. Interacts with ACBD3. Interacts with ARMH3, YWHAB, YWHAE, YWHAG, YWHAH, YWHAQ, YWHAZ and SFN. Interacts with GGA2 (via VHS domain); the interaction is important for PI4KB location at the Golgi apparatus membrane. Interacts with ATG9A. The cofactor is Mg(2+). Requires Mn(2+) as cofactor.

It is found in the endomembrane system. The protein localises to the mitochondrion outer membrane. The protein resides in the rough endoplasmic reticulum membrane. Its subcellular location is the golgi apparatus. It localises to the golgi apparatus membrane. The catalysed reaction is a 1,2-diacyl-sn-glycero-3-phospho-(1D-myo-inositol) + ATP = a 1,2-diacyl-sn-glycero-3-phospho-(1D-myo-inositol 4-phosphate) + ADP + H(+). Its activity is regulated as follows. Inhibited by wortmannin. Increased kinase activity upon interaction with NCS1/FREQ. Its function is as follows. Phosphorylates phosphatidylinositol (PI) in the first committed step in the production of the second messenger inositol-1,4,5,-trisphosphate (PIP). May regulate Golgi disintegration/reorganization during mitosis, possibly via its phosphorylation. Involved in Golgi-to-plasma membrane trafficking. This chain is Phosphatidylinositol 4-kinase beta (PI4KB), found in Callithrix jacchus (White-tufted-ear marmoset).